The chain runs to 226 residues: ATP synthase F(0) complex subunit a (226 aa).

Transmembrane regions (helical) follow at residues phenylalanine 6 to phenylalanine 26, tryptophan 68 to leucine 88, glutamine 97 to phenylalanine 117, isoleucine 138 to valine 158, isoleucine 164 to isoleucine 184, and threonine 189 to isoleucine 209.

The protein belongs to the ATPase A chain family. In terms of assembly, component of the ATP synthase complex composed at least of ATP5F1A/subunit alpha, ATP5F1B/subunit beta, ATP5MC1/subunit c (homooctomer), MT-ATP6/subunit a, MT-ATP8/subunit 8, ATP5ME/subunit e, ATP5MF/subunit f, ATP5MG/subunit g, ATP5MK/subunit k, ATP5MJ/subunit j, ATP5F1C/subunit gamma, ATP5F1D/subunit delta, ATP5F1E/subunit epsilon, ATP5PF/subunit F6, ATP5PB/subunit b, ATP5PD/subunit d, ATP5PO/subunit OSCP. ATP synthase complex consists of a soluble F(1) head domain (subunits alpha(3) and beta(3)) - the catalytic core - and a membrane F(0) domain - the membrane proton channel (subunits c, a, 8, e, f, g, k and j). These two domains are linked by a central stalk (subunits gamma, delta, and epsilon) rotating inside the F1 region and a stationary peripheral stalk (subunits F6, b, d, and OSCP). Interacts with DNAJC30; interaction is direct.

It localises to the mitochondrion inner membrane. It catalyses the reaction H(+)(in) = H(+)(out). Its function is as follows. Subunit a, of the mitochondrial membrane ATP synthase complex (F(1)F(0) ATP synthase or Complex V) that produces ATP from ADP in the presence of a proton gradient across the membrane which is generated by electron transport complexes of the respiratory chain. ATP synthase complex consist of a soluble F(1) head domain - the catalytic core - and a membrane F(1) domain - the membrane proton channel. These two domains are linked by a central stalk rotating inside the F(1) region and a stationary peripheral stalk. During catalysis, ATP synthesis in the catalytic domain of F(1) is coupled via a rotary mechanism of the central stalk subunits to proton translocation. With the subunit c (ATP5MC1), forms the proton-conducting channel in the F(0) domain, that contains two crucial half-channels (inlet and outlet) that facilitate proton movement from the mitochondrial intermembrane space (IMS) into the matrix. Protons are taken up via the inlet half-channel and released through the outlet half-channel, following a Grotthuss mechanism. The polypeptide is ATP synthase F(0) complex subunit a (Pan paniscus (Pygmy chimpanzee)).